A 479-amino-acid polypeptide reads, in one-letter code: T-box transcription factor TBX1 (479 aa).

Low complexity-rich tracts occupy residues 15–31 (ASSL…ADPF) and 59–86 (YPFA…AAAV). The segment at 15 to 86 (ASSLSGLGSP…GPGASRAAAV (72 aa)) is disordered. The segment at residues 108 to 286 (LWDEFNQLGT…SNPFAKGFRD (179 aa)) is a DNA-binding region (T-box). Residues 311–398 (RNPVASPTQP…APGASEPLHH (88 aa)) are disordered. A compositionally biased stretch (polar residues) spans 313–322 (PVASPTQPNG). Residues 323-338 (SDKDAAEARREFDRDS) are compositionally biased toward basic and acidic residues. Positions 415 to 426 (KSRPAPYPLPGL) match the Nuclear localization signal motif.

In terms of assembly, binds DNA as a dimer. Interacts with DSCR6. Interacts with NKX2-5. In terms of tissue distribution, expressed in skeletal muscle, lung and testis. Highly expressed in hair follicle stem cell, but not in terminally differentiating cells.

The protein localises to the nucleus. Transcription factor that plays a key role in cardiovascular development by promoting pharyngeal arch segmentation during embryonic development. Also involved in craniofacial muscle development. Together with NKX2-5, acts as a regulator of asymmetric cardiac morphogenesis by promoting expression of PITX2. Acts upstream of TBX1 for the formation of the thymus and parathyroid glands from the third pharyngeal pouch. Required for hair follicle stem cell self-renewal. Binds to the palindromic T site 5'-TTCACACCTAGGTGTGAA-3' DNA sequence. This is T-box transcription factor TBX1 from Mus musculus (Mouse).